We begin with the raw amino-acid sequence, 537 residues long: Glutamate--tRNA ligase (537 aa).

The short motif at 9 to 19 is the 'HIGH' region element; that stretch reads PSPTGLQHIGG. The Zn(2+) site is built by cysteine 125, cysteine 127, cysteine 152, and glutamate 154. Residues 270-274 carry the 'KMSKS' region motif; it reads KLSKR. Lysine 273 contributes to the ATP binding site.

Belongs to the class-I aminoacyl-tRNA synthetase family. Glutamate--tRNA ligase type 1 subfamily. Monomer. The cofactor is Zn(2+).

It is found in the cytoplasm. It carries out the reaction tRNA(Glu) + L-glutamate + ATP = L-glutamyl-tRNA(Glu) + AMP + diphosphate. Its function is as follows. Catalyzes the attachment of glutamate to tRNA(Glu) in a two-step reaction: glutamate is first activated by ATP to form Glu-AMP and then transferred to the acceptor end of tRNA(Glu). The chain is Glutamate--tRNA ligase from Treponema pallidum (strain Nichols).